Here is a 135-residue protein sequence, read N- to C-terminus: RuBisCO chaperone RbcX (135 aa).

Residues Q103–S135 form a disordered region. A compositionally biased stretch (polar residues) spans T109 to S126.

Belongs to the RbcX family. As to quaternary structure, homodimer. Interacts with the exposed C-terminal peptide of RbcL ('Glu-459-Asp-468'); binds 1 RbcL peptide per homodimer. Contacts a second RbcL monomer via its peripheral polar surface. A slightly longer RbcL peptide binds to RbcX2 with a higher affinity.

The protein localises to the carboxysome. Its subcellular location is the cytoplasm. Its function is as follows. An RbcL-specific chaperone. The central cleft of the RbcX homodimer (RbcX2) binds the C-terminus of an RbcL monomer, stabilizing the C-terminus and probably preventing its reassociation with chaperonin GroEL-ES. At the same time the peripheral region of RbcX2 binds a second RbcL monomer, bridging the RbcL homodimers in the correct orientation. The RbcX2(2)-bound RbcL dimers then assemble into the RbcL8 core (RbcL8-(RbcX2)8). RbcS binding triggers the release of RbcX2. Functionally, required for optimal reconstitution of RuBisCO upon expression of rbcL-rbcS subunits in E.coli. This Anabaena sp. (strain CA / ATCC 33047) protein is RuBisCO chaperone RbcX.